A 700-amino-acid chain; its full sequence is Elongation factor G (700 aa).

One can recognise a tr-type G domain in the interval 6–286; the sequence is HKVRNIGIMA…AVIDYLPSPL (281 aa). Residues 15 to 22, 79 to 83, and 133 to 136 contribute to the GTP site; these read AHIDAGKT, DTPGH, and NKMD.

It belongs to the TRAFAC class translation factor GTPase superfamily. Classic translation factor GTPase family. EF-G/EF-2 subfamily.

It localises to the cytoplasm. In terms of biological role, catalyzes the GTP-dependent ribosomal translocation step during translation elongation. During this step, the ribosome changes from the pre-translocational (PRE) to the post-translocational (POST) state as the newly formed A-site-bound peptidyl-tRNA and P-site-bound deacylated tRNA move to the P and E sites, respectively. Catalyzes the coordinated movement of the two tRNA molecules, the mRNA and conformational changes in the ribosome. The protein is Elongation factor G of Leifsonia xyli subsp. xyli (strain CTCB07).